The sequence spans 407 residues: Peptidase T (407 aa).

Residue His-82 participates in Zn(2+) binding. The active site involves Asp-84. Asp-143 contributes to the Zn(2+) binding site. Glu-177 (proton acceptor) is an active-site residue. Zn(2+) is bound by residues Glu-178, Asp-200, and His-382.

Belongs to the peptidase M20B family. Requires Zn(2+) as cofactor.

Its subcellular location is the cytoplasm. The enzyme catalyses Release of the N-terminal residue from a tripeptide.. Its function is as follows. Cleaves the N-terminal amino acid of tripeptides. This is Peptidase T from Streptococcus pyogenes serotype M3 (strain ATCC BAA-595 / MGAS315).